The following is a 339-amino-acid chain: Adenylosuccinate synthetase (339 aa).

GTP-binding positions include 12-18 and 42-44; these read GDEGKGS and GHS. Asp13 (proton acceptor) is an active-site residue. 2 residues coordinate Mg(2+): Asp13 and Gly42. IMP is bound by residues 13 to 16, 40 to 43, Thr127, Arg141, Gln179, Thr194, and Arg256; these read DEGK and NAGH. The Proton donor role is filled by His43. 252 to 258 lines the substrate pocket; it reads TVTGRRR. GTP contacts are provided by residues Arg258, 284 to 286, and 324 to 326; these read MLD and KTG.

The protein belongs to the adenylosuccinate synthetase family. Homodimer. Mg(2+) is required as a cofactor.

It is found in the cytoplasm. It carries out the reaction IMP + L-aspartate + GTP = N(6)-(1,2-dicarboxyethyl)-AMP + GDP + phosphate + 2 H(+). It functions in the pathway purine metabolism; AMP biosynthesis via de novo pathway; AMP from IMP: step 1/2. Functionally, plays an important role in the de novo pathway of purine nucleotide biosynthesis. Catalyzes the first committed step in the biosynthesis of AMP from IMP. The sequence is that of Adenylosuccinate synthetase from Thermococcus sibiricus (strain DSM 12597 / MM 739).